A 766-amino-acid polypeptide reads, in one-letter code: 5-methyltetrahydropteroyltriglutamate--homocysteine methyltransferase (766 aa).

5-methyltetrahydropteroyltri-L-glutamate-binding positions include 16 to 19 (RELK) and K119. L-homocysteine is bound by residues 440–442 (IGS) and E493. Residues 440–442 (IGS) and E493 each bind L-methionine. 5-methyltetrahydropteroyltri-L-glutamate is bound by residues 524–525 (RC) and W570. Position 608 (D608) interacts with L-homocysteine. D608 lines the L-methionine pocket. 5-methyltetrahydropteroyltri-L-glutamate is bound at residue E614. 3 residues coordinate Zn(2+): H650, C652, and E674. The active-site Proton donor is the H703. C735 contacts Zn(2+).

It belongs to the vitamin-B12 independent methionine synthase family. Requires Zn(2+) as cofactor.

The catalysed reaction is 5-methyltetrahydropteroyltri-L-glutamate + L-homocysteine = tetrahydropteroyltri-L-glutamate + L-methionine. It functions in the pathway amino-acid biosynthesis; L-methionine biosynthesis via de novo pathway; L-methionine from L-homocysteine (MetE route): step 1/1. Its function is as follows. Catalyzes the transfer of a methyl group from 5-methyltetrahydrofolate to homocysteine resulting in methionine formation. The sequence is that of 5-methyltetrahydropteroyltriglutamate--homocysteine methyltransferase from Pseudomonas aeruginosa (strain LESB58).